A 432-amino-acid polypeptide reads, in one-letter code: Enolase (432 aa).

(2R)-2-phosphoglycerate is bound at residue Gln-166. The active-site Proton donor is the Glu-208. 3 residues coordinate Mg(2+): Asp-245, Glu-291, and Asp-318. (2R)-2-phosphoglycerate-binding residues include Lys-343, Arg-372, Ser-373, and Lys-394. Catalysis depends on Lys-343, which acts as the Proton acceptor.

This sequence belongs to the enolase family. Mg(2+) is required as a cofactor.

It is found in the cytoplasm. The protein resides in the secreted. The protein localises to the cell surface. The enzyme catalyses (2R)-2-phosphoglycerate = phosphoenolpyruvate + H2O. It functions in the pathway carbohydrate degradation; glycolysis; pyruvate from D-glyceraldehyde 3-phosphate: step 4/5. In terms of biological role, catalyzes the reversible conversion of 2-phosphoglycerate (2-PG) into phosphoenolpyruvate (PEP). It is essential for the degradation of carbohydrates via glycolysis. This Leptospira interrogans serogroup Icterohaemorrhagiae serovar copenhageni (strain Fiocruz L1-130) protein is Enolase.